A 160-amino-acid polypeptide reads, in one-letter code: MTARHPKLPHVYLKPGEFHFATKPTVVTTVLGSCVSVTMFDVFSRTAAICHALLPDGPRDDVFRYVDSSIIRMLEMFMSRGITPRQLQVKLFGGSDMLGATASRPGVGSRNVDIARQVLAAEGLEVAAADVGGTRGRKLFFYTHTGEVLLKRLNRTEADS.

It belongs to the CheD family.

It carries out the reaction L-glutaminyl-[protein] + H2O = L-glutamyl-[protein] + NH4(+). In terms of biological role, probably deamidates glutamine residues to glutamate on methyl-accepting chemotaxis receptors (MCPs), playing an important role in chemotaxis. The polypeptide is Probable chemoreceptor glutamine deamidase CheD 2 (Geobacter sulfurreducens (strain ATCC 51573 / DSM 12127 / PCA)).